A 1100-amino-acid chain; its full sequence is Tyrosine-protein kinase JAK3 (1100 aa).

Positions 1 to 223 are cytokine/interferon/growth hormone receptors; the sequence is MAPPSEETPL…RRTVVQALRR (223 aa). Ser-17 carries the phosphoserine modification. The region spanning 24 to 353 is the FERM domain; the sequence is GALHVLLPPR…GYFRLICDSR (330 aa). The 101-residue stretch at 372–472 folds into the SH2; atypical domain; the sequence is LCHGPITLDF…GTALNLTSCC (101 aa). The region spanning 517 to 777 is the Protein kinase 1 domain; that stretch reads LEWHENLGHG…AILRDLNGLI (261 aa). Tyr-781 is subject to Phosphotyrosine; by autocatalysis. In terms of domain architecture, Protein kinase 2 spans 818-1091; that stretch reads LKYISLLGKG…PAFDTLSPQL (274 aa). ATP-binding positions include 824–832 and Lys-851; that span reads LGKGNFGSV. Phosphotyrosine occurs at positions 900 and 935. Asp-945 serves as the catalytic Proton acceptor. Phosphotyrosine; by autocatalysis occurs at positions 976 and 977.

It belongs to the protein kinase superfamily. Tyr protein kinase family. JAK subfamily. Interacts with STAM2 and MYO18A. Interacts with SHB. Interacts with CD69. Autophosphorylated, leading to regulate its activity. IL2 promotes phosphorylation on tyrosine residues, including autophosphorylation on Tyr-781. Dephosphorylation of Tyr-976 and Tyr-977 by PTPN2 negatively regulates cytokine-mediated signaling. As to expression, in contrast with the ubiquitous expression of the other JAKs, JAK3 is predominantly expressed in hematopoietic tissues.

It localises to the endomembrane system. It is found in the cytoplasm. It catalyses the reaction L-tyrosyl-[protein] + ATP = O-phospho-L-tyrosyl-[protein] + ADP + H(+). In terms of biological role, non-receptor tyrosine kinase involved in various processes such as cell growth, development, or differentiation. Mediates essential signaling events in both innate and adaptive immunity and plays a crucial role in hematopoiesis during T-cells development. In the cytoplasm, plays a pivotal role in signal transduction via its association with type I receptors sharing the common subunit gamma such as IL2R, IL4R, IL7R, IL9R, IL15R and IL21R. Following ligand binding to cell surface receptors, phosphorylates specific tyrosine residues on the cytoplasmic tails of the receptor, creating docking sites for STATs proteins. Subsequently, phosphorylates the STATs proteins once they are recruited to the receptor. Phosphorylated STATs then form homodimer or heterodimers and translocate to the nucleus to activate gene transcription. For example, upon IL2R activation by IL2, JAK1 and JAK3 molecules bind to IL2R beta (IL2RB) and gamma chain (IL2RG) subunits inducing the tyrosine phosphorylation of both receptor subunits on their cytoplasmic domain. Then, STAT5A and STAT5B are recruited, phosphorylated and activated by JAK1 and JAK3. Once activated, dimerized STAT5 translocates to the nucleus and promotes the transcription of specific target genes in a cytokine-specific fashion. The polypeptide is Tyrosine-protein kinase JAK3 (Rattus norvegicus (Rat)).